Consider the following 553-residue polypeptide: Putative transport protein YidE (553 aa).

Helical transmembrane passes span 4-24 (IALT…IGNV), 28-48 (GVGL…HFVS), 65-85 (FGLI…FFAS), 95-115 (LFAV…HKLF), and 158-178 (MSYA…MWML). RCK C-terminal domains lie at 191-276 (QQHE…VIGQ) and 279-361 (DTSL…VLGN). Transmembrane regions (helical) follow at residues 371 to 391 (MLPV…PVFV), 393 to 413 (GFPA…ALIL), 439 to 459 (IVLF…HTLV), 464 to 484 (LSWI…VGIL), 493 to 513 (YLTM…LAFA), and 533 to 553 (LVMF…WSIG).

It belongs to the AAE transporter (TC 2.A.81) family. YidE subfamily.

The protein resides in the cell membrane. The sequence is that of Putative transport protein YidE from Escherichia coli O6:K15:H31 (strain 536 / UPEC).